A 224-amino-acid polypeptide reads, in one-letter code: Small ribosomal subunit protein uS3 (224 aa).

The 69-residue stretch at 39–107 (IREFLKKKPS…DVWVEIAEVK (69 aa)) folds into the KH type-2 domain.

Belongs to the universal ribosomal protein uS3 family. In terms of assembly, part of the 30S ribosomal subunit. Forms a tight complex with proteins S10 and S14.

In terms of biological role, binds the lower part of the 30S subunit head. Binds mRNA in the 70S ribosome, positioning it for translation. In Chlamydia trachomatis serovar L2 (strain ATCC VR-902B / DSM 19102 / 434/Bu), this protein is Small ribosomal subunit protein uS3.